Consider the following 475-residue polypeptide: UDP-N-acetylmuramate--L-alanine ligase (475 aa).

Residue Gly112 to Thr118 participates in ATP binding.

It belongs to the MurCDEF family.

It is found in the cytoplasm. The catalysed reaction is UDP-N-acetyl-alpha-D-muramate + L-alanine + ATP = UDP-N-acetyl-alpha-D-muramoyl-L-alanine + ADP + phosphate + H(+). The protein operates within cell wall biogenesis; peptidoglycan biosynthesis. Cell wall formation. The protein is UDP-N-acetylmuramate--L-alanine ligase of Methylobacillus flagellatus (strain ATCC 51484 / DSM 6875 / VKM B-1610 / KT).